Here is a 95-residue protein sequence, read N- to C-terminus: Bombyxin F-1 (95 aa).

The first 19 residues, 1–19, serve as a signal peptide directing secretion; it reads MKLVVIVLLVISVSILVSA. Intrachain disulfides connect Cys-29–Cys-82, Cys-41–Cys-95, and Cys-81–Cys-86. Residues 53–71 constitute a propeptide, c peptide like; the sequence is NSDMVYEDSGMPELLPADT.

This sequence belongs to the insulin family. In terms of assembly, heterodimer of a B chain and an A chain linked by two disulfide bonds.

Its subcellular location is the secreted. In Bombyx mori (Silk moth), this protein is Bombyxin F-1 (BBXF1).